Reading from the N-terminus, the 773-residue chain is DNA polymerase (773 aa).

Intrachain disulfides connect Cys428-Cys442 and Cys506-Cys509.

Belongs to the DNA polymerase type-B family.

The catalysed reaction is DNA(n) + a 2'-deoxyribonucleoside 5'-triphosphate = DNA(n+1) + diphosphate. In terms of biological role, in addition to polymerase activity, this DNA polymerase exhibits 3' to 5' exonuclease activity. This is DNA polymerase (pol) from Thermococcus gorgonarius.